Here is a 270-residue protein sequence, read N- to C-terminus: 5'-AMP-activated protein kinase subunit beta-1 (270 aa).

The interval 1–44 (MGNTSSERAALERQAGHKTPRRDSSGGAKDGDRPKILMDSPEDA) is disordered. Glycine 2 is lipidated: N-myristoyl glycine. Threonine 4 is modified (phosphothreonine). 2 positions are modified to phosphoserine: serine 5 and serine 6. A compositionally biased stretch (basic and acidic residues) spans 9–36 (AALERQAGHKTPRRDSSGGAKDGDRPKI). Threonine 19 is modified (phosphothreonine). Residues serine 24 and serine 25 each carry the phosphoserine; by autocatalysis modification. 3 positions are modified to phosphoserine: serine 40, serine 96, and serine 101. Positions 68–163 (EANDKAPAQA…QVKKTDFEVF (96 aa)) are glycogen-binding domain. Position 108 is a phosphoserine; by autocatalysis (serine 108). Threonine 148 carries the phosphothreonine modification. At serine 182 the chain carries Phosphoserine. Residue lysine 201 is modified to N6-succinyllysine.

The protein belongs to the 5'-AMP-activated protein kinase beta subunit family. As to quaternary structure, AMPK is a heterotrimer of an alpha catalytic subunit (PRKAA1 or PRKAA2), a beta (PRKAB1 or PRKAB2) and a gamma non-catalytic subunits (PRKAG1, PRKAG2 or PRKAG3). Interacts with FNIP1 and FNIP2. In terms of processing, phosphorylated when associated with the catalytic subunit (PRKAA1 or PRKAA2). Phosphorylated by ULK1; leading to negatively regulate AMPK activity and suggesting the existence of a regulatory feedback loop between ULK1 and AMPK.

Non-catalytic subunit of AMP-activated protein kinase (AMPK), an energy sensor protein kinase that plays a key role in regulating cellular energy metabolism. In response to reduction of intracellular ATP levels, AMPK activates energy-producing pathways and inhibits energy-consuming processes: inhibits protein, carbohydrate and lipid biosynthesis, as well as cell growth and proliferation. AMPK acts via direct phosphorylation of metabolic enzymes, and by longer-term effects via phosphorylation of transcription regulators. Also acts as a regulator of cellular polarity by remodeling the actin cytoskeleton; probably by indirectly activating myosin. Beta non-catalytic subunit acts as a scaffold on which the AMPK complex assembles, via its C-terminus that bridges alpha (PRKAA1 or PRKAA2) and gamma subunits (PRKAG1, PRKAG2 or PRKAG3). The chain is 5'-AMP-activated protein kinase subunit beta-1 (Prkab1) from Mus musculus (Mouse).